Reading from the N-terminus, the 262-residue chain is Nurim (262 aa).

At 1–4 the chain is on the nuclear side; sequence MAPA. A helical membrane pass occupies residues 5–28; sequence LLLVPAALASFILAFGTGVEFVRF. Over 29–58 the chain is Perinuclear space; sequence TSLRPLLGGIPESGGPDARHGWLAALQDRS. A helical membrane pass occupies residues 59–80; sequence ILASLAWDLCLLLLFVVQHSLM. Residues 81 to 97 lie on the Nuclear side of the membrane; sequence ATEAVKAWTSRYFGVLQ. The helical transmembrane segment at 98–114 threads the bilayer; that stretch reads RSLYVACTALALQLVMR. The Perinuclear space segment spans residues 115–133; the sequence is YWETTPRGPVLWEARAEPW. Residues 134-164 traverse the membrane as a helical segment; sequence ATWVPLLCFVLHVVSWLLIFSILLVFDYAEL. Residues 165–191 are Nuclear-facing; the sequence is MGLKQVYYHVLGLGEPLSLKSPRALRL. Residues 192–210 form a helical membrane-spanning segment; it reads FSHLRHPVCVELLTVLWVV. At 211 to 216 the chain is on the perinuclear space side; the sequence is PTLGTD. A helical membrane pass occupies residues 217–234; sequence RLLLALLFTLYLGLAHGL. Over 235-262 the chain is Nuclear; sequence DQQDLRYLRSQLQRKLHLLSRPQDGEAE.

This sequence belongs to the nurim family.

Its subcellular location is the nucleus inner membrane. This Mus musculus (Mouse) protein is Nurim (Nrm).